Here is a 525-residue protein sequence, read N- to C-terminus: MSRQLLPVLLLLLLRASCPWGQEQGARSPSEEPPEEEIPKEDGILVLSRHTLGLALREHPALLVEFYAPWCGHCQALAPEYSKAAAVLAAESMVVTLAKVDGPAQRELAEEFGVTEYPTLKFFRNGNRTHPEEYTGPRDAEGIAEWLRRRVGPSAMRLEDEAAAQALIGGRDLVVIGFFQDLQDEDVATFLALAQDALDMTFGLTDRPRLFQQFGLTKDTVVLFKKFDEGRADFPVDEELGLDLGDLSRFLVTHSMRLVTEFNSQTSAKIFAARILNHLLLFVNQTLAAHRELLAGFGEAAPRFRGQVLFVVVDVAADNEHVLQYFGLKAEAAPTLRLVNLETTKKYAPVDGGPVTAASITAFCHAVLNGQVKPYLLSQEIPPDWDQRPVKTLVGKNFEQVAFDETKNVFVKFYAPWCTHCKEMAPAWEALAEKYQDHEDIIIAELDATANELDAFAVHGFPTLKYFPAGPGRKVIEYKSTRDLETFSKFLDNGGVLPTEEPPEEPAAPFPEPPANSTMGSKEEL.

The N-terminal stretch at 1-21 is a signal peptide; sequence MSRQLLPVLLLLLLRASCPWG. Positions 27–152 constitute a Thioredoxin 1 domain; that stretch reads RSPSEEPPEE…IAEWLRRRVG (126 aa). Residues cysteine 71 and cysteine 74 each act as nucleophile in the active site. Cysteines 71 and 74 form a disulfide. N-linked (GlcNAc...) asparagine glycans are attached at residues asparagine 127 and asparagine 284. Residues 367–496 enclose the Thioredoxin 2 domain; the sequence is VLNGQVKPYL…FSKFLDNGGV (130 aa). Residues cysteine 418 and cysteine 421 each act as nucleophile in the active site. A disulfide bond links cysteine 418 and cysteine 421. The tract at residues 492–525 is disordered; the sequence is DNGGVLPTEEPPEEPAAPFPEPPANSTMGSKEEL. Positions 505 to 514 are enriched in pro residues; it reads EPAAPFPEPP. The N-linked (GlcNAc...) asparagine glycan is linked to asparagine 516. Polar residues predominate over residues 516-525; the sequence is NSTMGSKEEL. A Prevents secretion from ER motif is present at residues 522 to 525; it reads KEEL.

The protein belongs to the protein disulfide isomerase family. In terms of assembly, monomer; predominantly as monomer under reducing conditions. Homodimer; disulfide-linked. Part of a large chaperone multiprotein complex comprising DNAJB11, HSP90B1, HSPA5, HYOU, PDIA2, PDIA4, PDIA6, PPIB, SDF2L1, UGGT1 and very small amounts of ERP29, but not, or at very low levels, CALR nor CANX. In terms of processing, the disulfide-linked homodimer exhibits an enhanced chaperone activity. Glycosylated. In terms of tissue distribution, highly expressed in pancreas (at protein level).

The protein localises to the endoplasmic reticulum lumen. The enzyme catalyses Catalyzes the rearrangement of -S-S- bonds in proteins.. In terms of biological role, acts as an intracellular estrogen-binding protein. May be involved in modulating cellular levels and biological functions of estrogens in the pancreas. May act as a chaperone that inhibits aggregation of misfolded proteins. The protein is Protein disulfide-isomerase A2 (PDIA2) of Homo sapiens (Human).